Here is a 234-residue protein sequence, read N- to C-terminus: Leucyl/phenylalanyl-tRNA--protein transferase (234 aa).

This sequence belongs to the L/F-transferase family.

Its subcellular location is the cytoplasm. The catalysed reaction is N-terminal L-lysyl-[protein] + L-leucyl-tRNA(Leu) = N-terminal L-leucyl-L-lysyl-[protein] + tRNA(Leu) + H(+). It carries out the reaction N-terminal L-arginyl-[protein] + L-leucyl-tRNA(Leu) = N-terminal L-leucyl-L-arginyl-[protein] + tRNA(Leu) + H(+). It catalyses the reaction L-phenylalanyl-tRNA(Phe) + an N-terminal L-alpha-aminoacyl-[protein] = an N-terminal L-phenylalanyl-L-alpha-aminoacyl-[protein] + tRNA(Phe). Its function is as follows. Functions in the N-end rule pathway of protein degradation where it conjugates Leu, Phe and, less efficiently, Met from aminoacyl-tRNAs to the N-termini of proteins containing an N-terminal arginine or lysine. The polypeptide is Leucyl/phenylalanyl-tRNA--protein transferase (Tolumonas auensis (strain DSM 9187 / NBRC 110442 / TA 4)).